The primary structure comprises 124 residues: Small ribosomal subunit protein uS12 (124 aa).

Belongs to the universal ribosomal protein uS12 family. Part of the 30S ribosomal subunit. Contacts proteins S8 and S17. May interact with IF1 in the 30S initiation complex.

Its function is as follows. With S4 and S5 plays an important role in translational accuracy. Functionally, interacts with and stabilizes bases of the 16S rRNA that are involved in tRNA selection in the A site and with the mRNA backbone. Located at the interface of the 30S and 50S subunits, it traverses the body of the 30S subunit contacting proteins on the other side and probably holding the rRNA structure together. The combined cluster of proteins S8, S12 and S17 appears to hold together the shoulder and platform of the 30S subunit. The sequence is that of Small ribosomal subunit protein uS12 from Photorhabdus laumondii subsp. laumondii (strain DSM 15139 / CIP 105565 / TT01) (Photorhabdus luminescens subsp. laumondii).